The primary structure comprises 1158 residues: ATP-dependent helicase/deoxyribonuclease subunit B (1158 aa).

The UvrD-like helicase ATP-binding domain occupies 1-275; that stretch reads MTLHAYLGRA…QYFNQLYRFN (275 aa). Position 8-15 (8-15) interacts with ATP; it reads GRAGTGKS. One can recognise a UvrD-like helicase C-terminal domain in the interval 269–583; it reads NQLYRFNNQD…SIGTMDLAKV (315 aa). [4Fe-4S] cluster contacts are provided by cysteine 784, cysteine 1112, cysteine 1115, and cysteine 1121.

This sequence belongs to the helicase family. AddB/RexB type 1 subfamily. As to quaternary structure, heterodimer of AddA and AddB. Mg(2+) is required as a cofactor. [4Fe-4S] cluster serves as cofactor.

Its function is as follows. The heterodimer acts as both an ATP-dependent DNA helicase and an ATP-dependent, dual-direction single-stranded exonuclease. Recognizes the chi site generating a DNA molecule suitable for the initiation of homologous recombination. The AddB subunit has 5' -&gt; 3' nuclease activity but not helicase activity. The chain is ATP-dependent helicase/deoxyribonuclease subunit B from Staphylococcus aureus (strain USA300).